A 172-amino-acid chain; its full sequence is Shikimate kinase (172 aa).

11–16 (GAGKST) serves as a coordination point for ATP. Mg(2+) is bound at residue S15. Residues D33, R57, and G79 each coordinate substrate. R117 lines the ATP pocket. A substrate-binding site is contributed by R136. R153 contributes to the ATP binding site.

The protein belongs to the shikimate kinase family. In terms of assembly, monomer. Mg(2+) serves as cofactor.

It is found in the cytoplasm. The enzyme catalyses shikimate + ATP = 3-phosphoshikimate + ADP + H(+). It participates in metabolic intermediate biosynthesis; chorismate biosynthesis; chorismate from D-erythrose 4-phosphate and phosphoenolpyruvate: step 5/7. Catalyzes the specific phosphorylation of the 3-hydroxyl group of shikimic acid using ATP as a cosubstrate. The polypeptide is Shikimate kinase (Pseudomonas syringae pv. tomato (strain ATCC BAA-871 / DC3000)).